A 236-amino-acid polypeptide reads, in one-letter code: uncharacterized protein (236 aa).

Positions Met1–Ser29 are cleaved as a signal peptide.

This is an uncharacterized protein from Archaeoglobus fulgidus (strain ATCC 49558 / DSM 4304 / JCM 9628 / NBRC 100126 / VC-16).